Here is a 28-residue protein sequence, read N- to C-terminus: Small spore coat assembly protein A (28 aa).

Residues 8–28 form a helical membrane-spanning segment; sequence GFALLVVLFILLIIVGAAYIY.

Belongs to the SscA family.

It is found in the spore coat. The protein localises to the membrane. In terms of biological role, spore protein involved in the assembly of several components of the spore coat, including CotB, CotG and CotH, and in spore germination. This is Small spore coat assembly protein A from Bacillus subtilis (strain 168).